Here is a 90-residue protein sequence, read N- to C-terminus: MENKRQGIIVYLHSLKHSKMLRKFGNVHYVSKRLKYVVLYCDMDLIEKTMEKISSYSYVKKVEPSYKPFLKLEFESKLDKAKEYDYKVGI.

The protein belongs to the UPF0298 family.

The protein resides in the cytoplasm. In Bacillus velezensis (strain DSM 23117 / BGSC 10A6 / LMG 26770 / FZB42) (Bacillus amyloliquefaciens subsp. plantarum), this protein is UPF0298 protein RBAM_014860.